The following is a 105-amino-acid chain: Cyclotide vibi-E (105 aa).

The first 9 residues, A1–A9, serve as a signal peptide directing secretion. A propeptide spanning residues S10–N69 is cleaved from the precursor. Positions G70–N99 form a cross-link, cyclopeptide (Gly-Asn). Disulfide bonds link C73/C90, C77/C92, and C82/C97. The propeptide occupies S100–Y105.

In terms of processing, this is a cyclic peptide.

Probably participates in a plant defense mechanism. Has cytotoxic activity, active against a human lymphoma cell line with an IC(50) of 3.2 uM. The chain is Cyclotide vibi-E from Viola biflora (Yellow wood violet).